Here is an 85-residue protein sequence, read N- to C-terminus: UPF0297 protein LGAS_0422 (85 aa).

The protein belongs to the UPF0297 family.

The chain is UPF0297 protein LGAS_0422 from Lactobacillus gasseri (strain ATCC 33323 / DSM 20243 / BCRC 14619 / CIP 102991 / JCM 1131 / KCTC 3163 / NCIMB 11718 / NCTC 13722 / AM63).